We begin with the raw amino-acid sequence, 521 residues long: uncharacterized protein (521 aa).

Helical transmembrane passes span 103-123 (NLML…VPMP), 136-156 (FWFF…LWIT), 177-197 (YILF…FTAW), 200-220 (ITFT…GISF), 259-279 (AYAH…VYIV), 299-319 (IMYV…SSWI), 327-346 (YALV…VYVR), 358-378 (FVLV…LITM), 411-431 (CVAS…LHFG), and 450-470 (FKLT…ASYL).

The protein resides in the membrane. This is an uncharacterized protein from Schizosaccharomyces pombe (strain 972 / ATCC 24843) (Fission yeast).